We begin with the raw amino-acid sequence, 587 residues long: Integrator complex subunit 14 (587 aa).

Positions 3–113 constitute a VWFA domain; sequence TLIALDASLS…NILQVVVFTD (111 aa). Disordered stretches follow at residues 190–211 and 304–331; these read KSSD…KSEL and REKS…DTSN.

The protein belongs to the Integrator subunit 14 family. In terms of assembly, belongs to the multiprotein complex Integrator, at least composed of IntS1, IntS2, IntS3, IntS4, omd/IntS5, IntS6, defl/IntS7, IntS8, IntS9, IntS10, IntS11, IntS12, asun/IntS13, IntS14 and IntS15. The core complex associates with protein phosphatase 2A subunits mts/PP2A and Pp2A-29B, to form the Integrator-PP2A (INTAC) complex.

Its subcellular location is the nucleus. Its function is as follows. Component of the integrator complex, a multiprotein complex that terminates RNA polymerase II (Pol II) transcription in the promoter-proximal region of genes. The integrator complex provides a quality checkpoint during transcription elongation by driving premature transcription termination of transcripts that are unfavorably configured for transcriptional elongation: the complex terminates transcription by (1) catalyzing dephosphorylation of the C-terminal domain (CTD) of Pol II subunit Polr2A/Rbp1 and Spt5, and (2) degrading the exiting nascent RNA transcript via endonuclease activity. The integrator complex is also involved in the 3'-end processing of the U7 snRNA, and also the spliceosomal snRNAs U1, U2, U4 and U5. This is Integrator complex subunit 14 from Drosophila melanogaster (Fruit fly).